Consider the following 715-residue polypeptide: MSLDCTSHIALGAASPAPEETYDHLSEVPVTREQLNHYRNVAQNARSELAATLVKFECAQSELQDLRSKMLSKEVSCQELKAEMESYKENNARKSSLLTSLRDRVQELEEESAALSTSKIRTEITAHAAIKENQELKKKVVELNEKLQKCSKENEENKKQVSKNCRKHEEFLTQLRDCLDPDERNDKASDEDLILKLRDLRKENEFVKGQIVILEETINVHEMEAKASRETIMRLASEVNREQKKAASCTEEKEKLNQDLLSAVEAKEALEREVKIFQERLLAGQQVWDASKQEVSLLKKSSSELEKSLKASQDAVTTSQSQYFSFREKIAALLRGRLSMTGSTEDTILEKIREMDSREESRDRMVSQLEAQISELVEQLGKESGFHQKALQRAQKAENMLETLQGQLTHLEAELVSGGVLRDNLNFEKQKYLKFLDQLSQKMKLDQMAAELGFDMRLDVVLARTEQLVRLESNAVIENKTIAHNLQRKLKTQKERLESKELHMSLLRQKIAQLEEEKQARTALVVERDNAHLTIRNLQKKVERLQKELNTCRDLHTELKAKLADTNELKIKTLEQTKAIEDLNKSRDQLEKMKEKAEKKLMSVKSELDTTEHEAKENKERARNMIEVVTSEMKTLKKSLEEAEKREKQLADFREVVSQMLGLNVTSLALPDYEIIKCLERLVHSHQHHFVTCACLKDVTTGQERHPQGHLQLLH.

Coiled-coil stretches lie at residues 30–286, 360–418, and 478–656; these read VTRE…AGQQ, ESRD…LVSG, and ENKT…FREV. The tract at residues 355–591 is required for binding to microtubules and Golgi apparatus location; it reads MDSREESRDR…DLNKSRDQLE (237 aa).

As to quaternary structure, binds Golgi-associated microtubules.

The protein localises to the golgi apparatus. Plays a role in Golgi-associated microtubules organization and stabilization. The sequence is that of Coiled-coil domain-containing protein 170 from Homo sapiens (Human).